A 200-amino-acid chain; its full sequence is Dephospho-CoA kinase (200 aa).

Positions 3–200 (KVGLTGGIGS…EELQRRLHSR (198 aa)) constitute a DPCK domain. 11 to 16 (GSGKSS) provides a ligand contact to ATP.

It belongs to the CoaE family.

The protein resides in the cytoplasm. The catalysed reaction is 3'-dephospho-CoA + ATP = ADP + CoA + H(+). It functions in the pathway cofactor biosynthesis; coenzyme A biosynthesis; CoA from (R)-pantothenate: step 5/5. Its function is as follows. Catalyzes the phosphorylation of the 3'-hydroxyl group of dephosphocoenzyme A to form coenzyme A. The protein is Dephospho-CoA kinase of Thermobifida fusca (strain YX).